Consider the following 1636-residue polypeptide: Tyrosine-protein phosphatase non-receptor type 23 (1636 aa).

The region spanning 8–394 (PMIWLDLKEA…AKIEDKNEVL (387 aa)) is the BRO1 domain. TPR repeat units lie at residues 250–283 (AVAH…LNEA) and 374–407 (EEKA…DPET). Residues 550-623 (KAVLQNLKRI…VYLEQNLAAQ (74 aa)) adopt a coiled-coil conformation. Positions 701 to 714 (EAARQQLLDRELKK) are enriched in basic and acidic residues. Disordered regions lie at residues 701–812 (EAAR…GPHA) and 888–1151 (QAPI…AAEG). Residue serine 733 is modified to Phosphoserine. The tract at residues 770-1130 (HFPPSPFPSS…SSSPESQHGG (361 aa)) is his. Composition is skewed to pro residues over residues 898–922 (RPNP…PTPY) and 950–962 (RIGP…PQPH). Arginine 950 is subject to Omega-N-methylarginine. A run of 6 repeats spans residues 953–954 (PQ), 955–956 (PQ), 957–958 (PH), 959–960 (PQ), 961–962 (PH), and 963–964 (PS). A 6 X 2 AA approximate tandem repeats of P-Q region spans residues 953–964 (PQPQPHPQPHPS). 3 stretches are compositionally biased toward pro residues: residues 983-1002 (LFPP…PYAP), 1036-1050 (FPSP…PPLA), and 1083-1109 (HLVP…PPPC). Residues 1120-1131 (LSSSPESQHGGT) are compositionally biased toward polar residues. Phosphoserine is present on residues serine 1122 and serine 1123. Phosphothreonine is present on threonine 1131. Residues 1192–1452 (DTVWRELQDA…RFCYEAVVRH (261 aa)) enclose the Tyrosine-protein phosphatase domain. Cysteine 1392 acts as the Phosphocysteine intermediate in catalysis. Residues 1513 to 1636 (LESPVASLPG…LDPLWTLNKT (124 aa)) are disordered. Pro residues-rich tracts occupy residues 1523–1533 (PAEPPGLPPAS) and 1542–1556 (SSSP…PEAP). Low complexity predominate over residues 1567-1587 (APSSGPPSSSLELLASLTPEA). Arginine 1615 is modified (omega-N-methylarginine).

Belongs to the protein-tyrosine phosphatase family. Non-receptor class subfamily. In terms of assembly, interacts with GRAP2 and GRB2. Interacts with UBAP1. Interacts with CHMP4B.

The protein localises to the nucleus. The protein resides in the cytoplasm. Its subcellular location is the cytoplasmic vesicle. It localises to the endosome. It is found in the cytoskeleton. The protein localises to the cilium basal body. The protein resides in the early endosome. It carries out the reaction O-phospho-L-tyrosyl-[protein] + H2O = L-tyrosyl-[protein] + phosphate. Its function is as follows. Plays a role in sorting of endocytic ubiquitinated cargos into multivesicular bodies (MVBs) via its interaction with the ESCRT-I complex (endosomal sorting complex required for transport I), and possibly also other ESCRT complexes. May act as a negative regulator of Ras-mediated mitogenic activity. Plays a role in ciliogenesis. This Homo sapiens (Human) protein is Tyrosine-protein phosphatase non-receptor type 23 (PTPN23).